The sequence spans 716 residues: uncharacterized protein (716 aa).

Disordered regions lie at residues serine 84–proline 103 and valine 153–glutamine 189. Position 97 is a phosphoserine (serine 97). Residues lysine 201, lysine 204, lysine 237, lysine 283, and lysine 626 each participate in a glycyl lysine isopeptide (Lys-Gly) (interchain with G-Cter in SUMO2) cross-link.

This is an uncharacterized protein from Mus musculus (Mouse).